We begin with the raw amino-acid sequence, 180 residues long: Small ribosomal subunit protein bS16 (180 aa).

Belongs to the bacterial ribosomal protein bS16 family.

The chain is Small ribosomal subunit protein bS16 from Flavobacterium psychrophilum (strain ATCC 49511 / DSM 21280 / CIP 103535 / JIP02/86).